Consider the following 435-residue polypeptide: AP-2 complex subunit mu (435 aa).

At S45 the chain carries Phosphoserine. T156 is modified (phosphothreonine). The MHD domain maps to R170–R434. 3 residues coordinate a 1,2-diacyl-sn-glycero-3-phospho-(1D-myo-inositol-3,4,5-trisphosphate): K341, K345, and K354.

The protein belongs to the adaptor complexes medium subunit family. As to quaternary structure, adaptor protein complex 2 (AP-2) is a heterotetramer composed of two large adaptins (alpha-type subunit AP2A1 or AP2A2 and beta-type subunit AP2B1), a medium adaptin (mu-type subunit AP2M1) and a small adaptin (sigma-type subunit AP2S1). Interacts with ATP6V1H and MEGF10. Interacts with EGFR. Interacts with PIP5K1C; tyrosine phosphorylation of PIP5K1C weakens the interaction. Interacts with KIAA0319; required for clathrin-mediated endocytosis of KIAA0319. Interacts with DVL2 (via DEP domain). Interacts with KCNQ1; mediates estrogen-induced internalization via clathrin-coated vesicles. Together with AP2A1 or AP2A2 and AP2B1, it interacts with ADAM10; this interaction facilitates ADAM10 endocytosis from the plasma membrane during long-term potentiation in hippocampal neurons. Probably interacts with ACE2 (via endocytic sorting signal motif); the interaction is inhibited by ACE2 phosphorylation. Interacts with RALBP1; the interaction is direct. Interacts with TMEM106B (via N-terminus). Phosphorylation at Thr-156 increases the affinity of the AP-2 complex for cargo membrane proteins during the initial stages of endocytosis.

The protein resides in the cell membrane. It is found in the membrane. It localises to the coated pit. In terms of biological role, component of the adaptor protein complex 2 (AP-2). Adaptor protein complexes function in protein transport via transport vesicles in different membrane traffic pathways. Adaptor protein complexes are vesicle coat components and appear to be involved in cargo selection and vesicle formation. AP-2 is involved in clathrin-dependent endocytosis in which cargo proteins are incorporated into vesicles surrounded by clathrin (clathrin-coated vesicles, CCVs) which are destined for fusion with the early endosome. The clathrin lattice serves as a mechanical scaffold but is itself unable to bind directly to membrane components. Clathrin-associated adaptor protein (AP) complexes which can bind directly to both the clathrin lattice and to the lipid and protein components of membranes are considered to be the major clathrin adaptors contributing the CCV formation. AP-2 also serves as a cargo receptor to selectively sort the membrane proteins involved in receptor-mediated endocytosis. AP-2 seems to play a role in the recycling of synaptic vesicle membranes from the presynaptic surface. AP-2 recognizes Y-X-X-[FILMV] (Y-X-X-Phi) and [ED]-X-X-X-L-[LI] endocytosis signal motifs within the cytosolic tails of transmembrane cargo molecules. AP-2 may also play a role in maintaining normal post-endocytic trafficking through the ARF6-regulated, non-clathrin pathway. During long-term potentiation in hippocampal neurons, AP-2 is responsible for the endocytosis of ADAM10. The AP-2 mu subunit binds to transmembrane cargo proteins; it recognizes the Y-X-X-Phi motifs. The surface region interacting with to the Y-X-X-Phi motif is inaccessible in cytosolic AP-2, but becomes accessible through a conformational change following phosphorylation of AP-2 mu subunit at Thr-156 in membrane-associated AP-2. The membrane-specific phosphorylation event appears to involve assembled clathrin which activates the AP-2 mu kinase AAK1. Plays a role in endocytosis of frizzled family members upon Wnt signaling. The sequence is that of AP-2 complex subunit mu (AP2M1) from Pongo abelii (Sumatran orangutan).